An 883-amino-acid polypeptide reads, in one-letter code: Integrator complex subunit 6-B (883 aa).

Residues I3 to I227 form the VWFA domain. The Inhibitory loop motif lies at M626 to E633.

It belongs to the Integrator subunit 6 family. In terms of assembly, component of the Integrator complex, composed of core subunits INTS1, INTS2, INTS3, INTS4, INTS5, INTS6, INTS7, INTS8, INTS9/RC74, INTS10, INTS11/CPSF3L, INTS12, INTS13, INTS14 and INTS15. The core complex associates with protein phosphatase 2A subunits PPP2CA and PPP2R1A, to form the Integrator-PP2A (INTAC) complex.

The protein resides in the nucleus. It is found in the chromosome. In terms of biological role, component of the integrator complex, a multiprotein complex that terminates RNA polymerase II (Pol II) transcription in the promoter-proximal region of genes. The integrator complex provides a quality checkpoint during transcription elongation by driving premature transcription termination of transcripts that are unfavorably configured for transcriptional elongation: the complex terminates transcription by (1) catalyzing dephosphorylation of the C-terminal domain (CTD) of Pol II subunit POLR2A/RPB1 and SUPT5H/SPT5, (2) degrading the exiting nascent RNA transcript via endonuclease activity and (3) promoting the release of Pol II from bound DNA. The integrator complex is also involved in terminating the synthesis of non-coding Pol II transcripts, such as enhancer RNAs (eRNAs), small nuclear RNAs (snRNAs), telomerase RNAs and long non-coding RNAs (lncRNAs). Within the integrator complex, INTS6 acts as a molecular adapter that promotes assembly of protein phosphatase 2A (PP2A) subunits to the integrator core complex, promoting recruitment of PP2A to transcription pause-release checkpoint. The sequence is that of Integrator complex subunit 6-B (ints6-b) from Xenopus laevis (African clawed frog).